Here is a 143-residue protein sequence, read N- to C-terminus: QDPYVKEAENLKKYFNAGHSDVADNGTLFLGILKNWKEESDRKIMQSQIVSFYFKLFKNFKDDQSIQKSVETIKEDMNVKFFNSNKKKRDDFEKLTNYSVTDLNVQRKAIHELIQVMAELSPAVKTGKRKRSQMLFRGRRASQ.

The residue at position 1 (Gln-1) is a Pyrrolidone carboxylic acid. Residues Asn-25 and Asn-97 are each glycosylated (N-linked (GlcNAc...) asparagine).

The protein belongs to the type II (or gamma) interferon family. Homodimer. Interacts with IFNGR1 (via extracellular domain); this interaction promotes IFNGR1 dimerization.

The protein resides in the secreted. Type II interferon produced by immune cells such as T-cells and NK cells that plays crucial roles in antimicrobial, antiviral, and antitumor responses by activating effector immune cells and enhancing antigen presentation. Primarily signals through the JAK-STAT pathway after interaction with its receptor IFNGR1 to affect gene regulation. Upon IFNG binding, IFNGR1 intracellular domain opens out to allow association of downstream signaling components JAK2, JAK1 and STAT1, leading to STAT1 activation, nuclear translocation and transcription of IFNG-regulated genes. Many of the induced genes are transcription factors such as IRF1 that are able to further drive regulation of a next wave of transcription. Plays a role in class I antigen presentation pathway by inducing a replacement of catalytic proteasome subunits with immunoproteasome subunits. In turn, increases the quantity, quality, and repertoire of peptides for class I MHC loading. Increases the efficiency of peptide generation also by inducing the expression of activator PA28 that associates with the proteasome and alters its proteolytic cleavage preference. Up-regulates as well MHC II complexes on the cell surface by promoting expression of several key molecules such as cathepsins B/CTSB, H/CTSH, and L/CTSL. Participates in the regulation of hematopoietic stem cells during development and under homeostatic conditions by affecting their development, quiescence, and differentiation. The polypeptide is Interferon gamma (IFNG) (Pan troglodytes (Chimpanzee)).